Here is a 310-residue protein sequence, read N- to C-terminus: Small ribosomal subunit protein uS2 (310 aa).

2 disordered regions span residues 213–240 (EEQAALARQQEEANAGTTAGFSEWGGAA) and 271–310 (WDSVAPGATDDWGAEPAAPSSDWGTAVTMQEQAKPSTDWA). Positions 216 to 227 (AALARQQEEANA) are enriched in low complexity. Polar residues predominate over residues 297-310 (VTMQEQAKPSTDWA).

The protein belongs to the universal ribosomal protein uS2 family. Component of the small ribosomal subunit. Mature ribosomes consist of a small (40S) and a large (60S) subunit. The 40S subunit contains about 33 different proteins and 1 molecule of RNA (18S). The 60S subunit contains about 49 different proteins and 3 molecules of RNA (28S, 5.8S and 5S). Interacts with ribosomal protein S21.

The protein resides in the cytoplasm. Required for the assembly and/or stability of the 40S ribosomal subunit. Required for the processing of the 20S rRNA-precursor to mature 18S rRNA in a late step of the maturation of 40S ribosomal subunits. In Nematostella vectensis (Starlet sea anemone), this protein is Small ribosomal subunit protein uS2.